The following is a 115-amino-acid chain: Insulin (115 aa).

Residues methionine 1 to threonine 26 form the signal peptide. Cystine bridges form between cysteine 33-cysteine 101, cysteine 45-cysteine 114, and cysteine 100-cysteine 105. A propeptide spans aspartate 60–serine 92 (c peptide).

The protein belongs to the insulin family. Heterodimer of a B chain and an A chain linked by two disulfide bonds.

The protein localises to the secreted. Functionally, insulin decreases blood glucose concentration. It increases cell permeability to monosaccharides, amino acids and fatty acids. It accelerates glycolysis, the pentose phosphate cycle, and glycogen synthesis in liver. The chain is Insulin (ins) from Myxine glutinosa (Atlantic hagfish).